The following is a 129-amino-acid chain: MARKTNTRKRRVKKNIESGIAHIRSTFNNTIVTITDTRGNAIGWSSAGALGFKGSKKSTPFAAQMAAETAAKSAIENGMKTLEVTVKGPGAGREAAIRSLQAAGLEVTAIVDVTPVPHNGCRPPKRRRV.

The protein belongs to the universal ribosomal protein uS11 family. Part of the 30S ribosomal subunit. Interacts with proteins S7 and S18. Binds to IF-3.

Its function is as follows. Located on the platform of the 30S subunit, it bridges several disparate RNA helices of the 16S rRNA. Forms part of the Shine-Dalgarno cleft in the 70S ribosome. The sequence is that of Small ribosomal subunit protein uS11 from Oceanobacillus iheyensis (strain DSM 14371 / CIP 107618 / JCM 11309 / KCTC 3954 / HTE831).